The chain runs to 203 residues: Ribosomal RNA small subunit methyltransferase G (203 aa).

S-adenosyl-L-methionine-binding positions include G73, L78, 124–125, and R138; that span reads VE.

It belongs to the methyltransferase superfamily. RNA methyltransferase RsmG family.

The protein resides in the cytoplasm. The enzyme catalyses guanosine(527) in 16S rRNA + S-adenosyl-L-methionine = N(7)-methylguanosine(527) in 16S rRNA + S-adenosyl-L-homocysteine. Functionally, specifically methylates the N7 position of guanine in position 527 of 16S rRNA. The protein is Ribosomal RNA small subunit methyltransferase G of Haemophilus ducreyi (strain 35000HP / ATCC 700724).